Consider the following 125-residue polypeptide: Small ribosomal subunit protein uS13 (125 aa).

Residues 101–125 (QRTKTNARTRKGKRKTVANKKIAAK) form a disordered region.

It belongs to the universal ribosomal protein uS13 family. Part of the 30S ribosomal subunit. Forms a loose heterodimer with protein S19. Forms two bridges to the 50S subunit in the 70S ribosome.

Located at the top of the head of the 30S subunit, it contacts several helices of the 16S rRNA. In the 70S ribosome it contacts the 23S rRNA (bridge B1a) and protein L5 of the 50S subunit (bridge B1b), connecting the 2 subunits; these bridges are implicated in subunit movement. Contacts the tRNAs in the A and P-sites. The sequence is that of Small ribosomal subunit protein uS13 from Borrelia duttonii (strain Ly).